We begin with the raw amino-acid sequence, 770 residues long: Protein argonaute (770 aa).

Positions 1–151 are N-terminal domain; the sequence is MKAKVVINLV…VIHIIHQIQS (151 aa). In terms of domain architecture, PAZ spans 154-272; that stretch reads TLWELVNKDP…LLPQLVVPTY (119 aa). The interdomain connector stretch occupies residues 276 to 361; that stretch reads QLESDVAKEI…SQLLLWTNYS (86 aa). Positions 362-544 are mid domain; it reads RKYPVILPYE…LSKLGVKYYV (183 aa). Residues 473 to 756 form the Piwi domain; sequence GLAFIAARNK…FANAIRNEWK (284 aa). Residues D558, E596, D628, and H745 contribute to the active site. D558 is a binding site for Mn(2+). The Mn(2+) site is built by D628, H745, and V770.

This sequence belongs to the argonaute family. Long pAgo subfamily. Monomer. Requires Mn(2+) as cofactor.

Its activity is regulated as follows. Inhibited at greater than 500 mM NaCl. Its function is as follows. A DNA-guided ssDNA endonuclease that may play a role in defense against invading mobile genetic elements. Uses short 5'-phospho-ssDNA sequences as guides (gDNA) to bind complementary target strands, resulting in cleavage of the target DNA (tDNA). Endonucleolytically cleaves DNA in short dsDNA (the gDNA indicates where to cleave on the tDNA). Efficient guide-dependent target DNA cleavage requires a minimal gDNA length of 15 nucleotides (nt) and works up to at least 31 nt. Overexpression decreases plasmid transformation efficiency. Has no appreciable activity with gRNA or on target RNA. Also has guide-independent activity on plasmid DNA called 'chopping'. The cleavage site is 10 nucleotides (nt) downstream of the target residue base-paired with the 5'-end of the gDNA, cleavage is insensitive to adenine methylation. DNA cleavage produces 5'-phosphomonoesters (as it can be ligated by T4 DNA ligase). This is Protein argonaute from Pyrococcus furiosus (strain ATCC 43587 / DSM 3638 / JCM 8422 / Vc1).